Consider the following 344-residue polypeptide: Dihydroorotate dehydrogenase (quinone) (344 aa).

FMN-binding positions include 65-69 (AGLDK) and Thr-89. Residue Lys-69 coordinates substrate. 114–118 (NRMGF) contacts substrate. Residues Asn-145 and Asn-178 each contribute to the FMN site. Asn-178 serves as a coordination point for substrate. Ser-181 functions as the Nucleophile in the catalytic mechanism. Asn-183 lines the substrate pocket. FMN-binding residues include Lys-223 and Thr-251. Residue 252–253 (NT) participates in substrate binding. FMN is bound by residues Gly-274, Gly-303, and 324–325 (YS).

This sequence belongs to the dihydroorotate dehydrogenase family. Type 2 subfamily. In terms of assembly, monomer. The cofactor is FMN.

It localises to the cell membrane. It catalyses the reaction (S)-dihydroorotate + a quinone = orotate + a quinol. It participates in pyrimidine metabolism; UMP biosynthesis via de novo pathway; orotate from (S)-dihydroorotate (quinone route): step 1/1. In terms of biological role, catalyzes the conversion of dihydroorotate to orotate with quinone as electron acceptor. In Cupriavidus taiwanensis (strain DSM 17343 / BCRC 17206 / CCUG 44338 / CIP 107171 / LMG 19424 / R1) (Ralstonia taiwanensis (strain LMG 19424)), this protein is Dihydroorotate dehydrogenase (quinone).